A 365-amino-acid polypeptide reads, in one-letter code: Hematopoietic SH2 domain-containing protein homolog (365 aa).

Residues 34-125 (WFHGIISRKA…PYNELLTVAC (92 aa)) form the SH2 domain. 2 disordered regions span residues 199-278 (QSTD…QQKP) and 335-365 (AEHPISDGIPKSSDRNLPVEYRHPPPFAPGY). A compositionally biased stretch (polar residues) spans 257 to 277 (QQITPNTPNEGRTQQKNQQQK).

Its function is as follows. May be an adapter protein involved in tyrosine kinase signaling. In Danio rerio (Zebrafish), this protein is Hematopoietic SH2 domain-containing protein homolog (hsh2d).